A 401-amino-acid chain; its full sequence is Tryptophan synthase beta chain (401 aa).

The residue at position 92 (K92) is an N6-(pyridoxal phosphate)lysine.

It belongs to the TrpB family. Tetramer of two alpha and two beta chains. Pyridoxal 5'-phosphate is required as a cofactor.

It carries out the reaction (1S,2R)-1-C-(indol-3-yl)glycerol 3-phosphate + L-serine = D-glyceraldehyde 3-phosphate + L-tryptophan + H2O. It functions in the pathway amino-acid biosynthesis; L-tryptophan biosynthesis; L-tryptophan from chorismate: step 5/5. The beta subunit is responsible for the synthesis of L-tryptophan from indole and L-serine. This Ruthia magnifica subsp. Calyptogena magnifica protein is Tryptophan synthase beta chain.